Here is a 965-residue protein sequence, read N- to C-terminus: Valine--tRNA ligase (965 aa).

The interval 1–22 is disordered; it reads MENTPSHINKTEPSLDKTYSPQ. The 'HIGH' region signature appears at 56 to 66; sequence PNVTGSLHMGH. The 'KMSKS' region signature appears at 568 to 572; the sequence is KMSKS. Lysine 571 is an ATP binding site. Positions 896 to 965 form a coiled coil; the sequence is LIDKATELDR…IEQQATIAAL (70 aa).

Belongs to the class-I aminoacyl-tRNA synthetase family. ValS type 1 subfamily. As to quaternary structure, monomer.

The protein resides in the cytoplasm. The enzyme catalyses tRNA(Val) + L-valine + ATP = L-valyl-tRNA(Val) + AMP + diphosphate. Functionally, catalyzes the attachment of valine to tRNA(Val). As ValRS can inadvertently accommodate and process structurally similar amino acids such as threonine, to avoid such errors, it has a 'posttransfer' editing activity that hydrolyzes mischarged Thr-tRNA(Val) in a tRNA-dependent manner. The polypeptide is Valine--tRNA ligase (Yersinia pseudotuberculosis serotype I (strain IP32953)).